Reading from the N-terminus, the 43-residue chain is Photosystem I reaction center subunit IX (43 aa).

A helical membrane pass occupies residues 7 to 27 (YLSTAPVLATFWFGLLAGLLI).

This sequence belongs to the PsaJ family.

Its subcellular location is the plastid. The protein resides in the chloroplast thylakoid membrane. May help in the organization of the PsaE and PsaF subunits. The sequence is that of Photosystem I reaction center subunit IX from Gnetum parvifolium (Small-leaved jointfir).